Here is a 434-residue protein sequence, read N- to C-terminus: 3-phosphoshikimate 1-carboxyvinyltransferase (434 aa).

3-phosphoshikimate contacts are provided by K22, S23, and R27. K22 lines the phosphoenolpyruvate pocket. Phosphoenolpyruvate-binding residues include G94 and R122. Residues S167, Q169, D314, and K341 each contribute to the 3-phosphoshikimate site. Q169 lines the phosphoenolpyruvate pocket. D314 functions as the Proton acceptor in the catalytic mechanism. Phosphoenolpyruvate-binding residues include R345 and R391.

Belongs to the EPSP synthase family. Monomer.

The protein localises to the cytoplasm. It carries out the reaction 3-phosphoshikimate + phosphoenolpyruvate = 5-O-(1-carboxyvinyl)-3-phosphoshikimate + phosphate. It participates in metabolic intermediate biosynthesis; chorismate biosynthesis; chorismate from D-erythrose 4-phosphate and phosphoenolpyruvate: step 6/7. Its function is as follows. Catalyzes the transfer of the enolpyruvyl moiety of phosphoenolpyruvate (PEP) to the 5-hydroxyl of shikimate-3-phosphate (S3P) to produce enolpyruvyl shikimate-3-phosphate and inorganic phosphate. This Leuconostoc mesenteroides subsp. mesenteroides (strain ATCC 8293 / DSM 20343 / BCRC 11652 / CCM 1803 / JCM 6124 / NCDO 523 / NBRC 100496 / NCIMB 8023 / NCTC 12954 / NRRL B-1118 / 37Y) protein is 3-phosphoshikimate 1-carboxyvinyltransferase.